Consider the following 862-residue polypeptide: MEENIFSSNQDIDAIDVEDSIKASYLDYSMSVIIGRALPDARDGLKPVHRRILYAMNDLGVGSRSPYKKSARIVGDVIGKYHPHGDTAVYDALVRMAQNFSMRVPAVDGQGNFGSVDGDGAAAMRYTEARMTVLAEELLRDLDKDTVDFIPNYDDSLSEPDVLPARVPNLLLNGSSGIAVGMATNIPPHSLDELVNGLLTLLDDKEVGLEDIMTHIKGPDFPTGGIIFGKKGIIEAYKTGRGRIKLRAKTHIEKKPNKDVIVVDELPYQVNKAKLHADIADLVKEKLIDGISEVRDESDRDGIRLVIELKRDAMSEIVLNNLFKSTQMEVTFGVIMLAINNKEPKVFSLLELLKLFLNHRKTVIIRRTIFELQKARARAHILEGLKIALDNIDAVINLIKTSADTNSARDGLMAKFGLSELQSNAILDMRLSKLTGLEREKLEAELKEILELIEKLDAILKSETLIENIIRDELLEIKSKFKCPRITDIVDDYDDIDVEDLIPNENMVVTITHRGYIKRVPSKSYEKQKRGGKGKVAVTTYDDDFIESFFTCMSHDTLMFVTDRGQLYWLKVYKIPEGSRTAKGKAVVNLISLQADEKIKAIIPTTDFDESKSLAFFTKNGIVKRTNLSEFKNIRSIGVKAINLDDNDELVTVVIANSEPDESYDDSFEDGEGVSNLQTISEDNSENSLESGKMLFAVTKKGMCIKFALNKVRQIGRVSRGVTAIRFKENLDEVVGAVVIENDSQEILSVSQKGIGKRTTADEYRLQSRGGKGVICMKLTPKTKDLVGVVMVDEEMDLMALTSSGKMIRVDMQSIRKAGRNTSGVIVVNVDGDEVVSIARCPKEESDDDDIVADDTQEQDME.

Residues 38-501 (LPDARDGLKP…DYDDIDVEDL (464 aa)) form the Topo IIA-type catalytic domain. Residue tyrosine 126 is the O-(5'-phospho-DNA)-tyrosine intermediate of the active site. Positions 528–534 (QKRGGKG) match the GyrA-box motif. The tract at residues 843–862 (KEESDDDDIVADDTQEQDME) is disordered. Positions 845–862 (ESDDDDIVADDTQEQDME) are enriched in acidic residues.

The protein belongs to the type II topoisomerase GyrA/ParC subunit family. As to quaternary structure, heterotetramer, composed of two GyrA and two GyrB chains. In the heterotetramer, GyrA contains the active site tyrosine that forms a transient covalent intermediate with DNA, while GyrB binds cofactors and catalyzes ATP hydrolysis.

Its subcellular location is the cytoplasm. It carries out the reaction ATP-dependent breakage, passage and rejoining of double-stranded DNA.. Functionally, a type II topoisomerase that negatively supercoils closed circular double-stranded (ds) DNA in an ATP-dependent manner to modulate DNA topology and maintain chromosomes in an underwound state. Negative supercoiling favors strand separation, and DNA replication, transcription, recombination and repair, all of which involve strand separation. Also able to catalyze the interconversion of other topological isomers of dsDNA rings, including catenanes and knotted rings. Type II topoisomerases break and join 2 DNA strands simultaneously in an ATP-dependent manner. This is DNA gyrase subunit A from Campylobacter fetus.